Here is a 126-residue protein sequence, read N- to C-terminus: Small ribosomal subunit protein uS12 (126 aa).

The interval 1–29 is disordered; the sequence is MPTIQQLIRQPRAPKKRRSKSPALQKCPQ. Asp-89 is subject to 3-methylthioaspartic acid.

This sequence belongs to the universal ribosomal protein uS12 family. Part of the 30S ribosomal subunit. Contacts proteins S8 and S17. May interact with IF1 in the 30S initiation complex.

Functionally, with S4 and S5 plays an important role in translational accuracy. In terms of biological role, interacts with and stabilizes bases of the 16S rRNA that are involved in tRNA selection in the A site and with the mRNA backbone. Located at the interface of the 30S and 50S subunits, it traverses the body of the 30S subunit contacting proteins on the other side and probably holding the rRNA structure together. The combined cluster of proteins S8, S12 and S17 appears to hold together the shoulder and platform of the 30S subunit. This Protochlamydia amoebophila (strain UWE25) protein is Small ribosomal subunit protein uS12.